The sequence spans 596 residues: Nuclear receptor subfamily 2 group C member 2 (596 aa).

Residue S19 is modified to Phosphoserine; by MAPK. S46 is modified (phosphoserine). S55 and S68 each carry phosphoserine; by MAPK. Residue S98 is modified to Phosphoserine. The nuclear receptor DNA-binding region spans 114–189 (VEYCVVCGDK…MGMKMESVQS (76 aa)). 2 consecutive NR C4-type zinc fingers follow at residues 117–137 (CVVCGDKASGRHYGAVSCEGC) and 153–177 (CRSSQDCIINKHHRNRCQFCRLKKC). Residue K192 forms a Glycyl lysine isopeptide (Lys-Gly) (interchain with G-Cter in SUMO2) linkage. Position 219 is a phosphoserine (S219). K231 is modified (N6-acetyllysine). The 243-residue stretch at 341-583 (GSIHVISRDQ…SIIPYILKME (243 aa)) folds into the NR LBD domain.

This sequence belongs to the nuclear hormone receptor family. NR2 subfamily. In terms of assembly, homodimer; can bind DNA as homodimer. Heterodimer; binds DNA as a heterodimer with NR2C1 required for chromatin remodeling and for binding to promoter regions such as globin DR1 repeats. Interacts with NR2C2AP; the interaction represses selective NR2C2-mediated transcriptional activity. Interacts with PCAF; the interaction preferentially occurs on the non-phosphorylated form and induces NR2C2-mediated transactivation activity and does not require the ligand-binding domain. Interacts (MAPK-mediated phosphorylated form) with NRIP1; the interaction promotes repression of NR2C2-mediated activity. Interacts with NLRP10. Interacts (via ligand-binding region) with transcriptional corepressor JAZF1; the interaction promotes NR2C2-mediated transcriptional repression. In terms of processing, phosphorylation on Ser-19 and Ser-68 is an important regulator of NR2C2-mediated transcriptional activity. Phosphorylation on these residues recruits the corepressor, NRIP1, leading to transcripional repression, whereas the non-phosphorylated form preferentially recruits the coactivator, PCAF. Expressed in hepatocytes. Also expressed in granule cells of the hippocampus and the cerebellum.

It is found in the nucleus. Orphan nuclear receptor that can act as a repressor or activator of transcription. An important repressor of nuclear receptor signaling pathways such as retinoic acid receptor, retinoid X, vitamin D3 receptor, thyroid hormone receptor and estrogen receptor pathways. May regulate gene expression during the late phase of spermatogenesis. Activates transcriptional activity of LHCG and is antagonist of PPARA-mediated transactivation. Together with NR2C1, forms the core of the DRED (direct repeat erythroid-definitive) complex that represses embryonic and fetal globin transcription including that of GATA1. Binds to hormone response elements (HREs) consisting of two 5'-AGGTCA-3' half site direct repeat consensus sequences. Plays a fundamental role in early embryonic development and embryonic stem cells. Required for normal spermatogenesis and cerebellum development. Appears to be important for neurodevelopmentally regulated behavior. The protein is Nuclear receptor subfamily 2 group C member 2 (Nr2c2) of Rattus norvegicus (Rat).